Reading from the N-terminus, the 155-residue chain is Cytochrome c-type biogenesis protein CcmE (155 aa).

Residues 1-8 (MHPKRKQR) lie on the Cytoplasmic side of the membrane. A helical; Signal-anchor for type II membrane protein membrane pass occupies residues 9–29 (LILVLFVVLVSSVGVSLTLYA). The Periplasmic segment spans residues 30 to 155 (LNENINLFYP…KTCKGISYDS (126 aa)). Residues H124 and Y128 each coordinate heme.

The protein belongs to the CcmE/CycJ family.

The protein resides in the cell inner membrane. Functionally, heme chaperone required for the biogenesis of c-type cytochromes. Transiently binds heme delivered by CcmC and transfers the heme to apo-cytochromes in a process facilitated by CcmF and CcmH. The chain is Cytochrome c-type biogenesis protein CcmE from Teredinibacter turnerae (strain ATCC 39867 / T7901).